Here is a 213-residue protein sequence, read N- to C-terminus: Redox-sensing transcriptional repressor Rex (213 aa).

Residues 18–57 (LYYRFLKNLHASGKQRVSSAELSEAVKVDPATIRRDFSYF) constitute a DNA-binding region (H-T-H motif). NAD(+) is bound at residue 92 to 97 (GVGNLG).

This sequence belongs to the transcriptional regulatory Rex family. Homodimer.

It localises to the cytoplasm. In terms of biological role, modulates transcription in response to changes in cellular NADH/NAD(+) redox state. The chain is Redox-sensing transcriptional repressor Rex from Geobacillus kaustophilus (strain HTA426).